A 191-amino-acid polypeptide reads, in one-letter code: MSLNVELIKDKILSENYFVLRNITYDLTRKDGEVVRHKREVYDRGNGAAVLLYNREKKSVVLIRQFRVATWVNGNPDGMLIEACAGLLDDDEPEVCIRKEAIEETGYRVNAAEKVFELYTSPGGVTELIHLFIAEYDDASRANEGGGVEDEEIEVLEMPFSEALEKVRQGVIRDAKTVLLLQHLQLRGIMD.

Residues Y17, 38–40 (KRE), R67, and 85–87 (AGL) contribute to the GDP-alpha-D-mannose site. Residues 43-180 (DRGNGAAVLL…VIRDAKTVLL (138 aa)) form the Nudix hydrolase domain. Mg(2+) is bound by residues A85, E100, and E104. Positions 86 to 106 (GLLDDDEPEVCIRKEAIEETG) match the Nudix box motif. GDP-alpha-D-mannose is bound by residues E104, E127, 150-151 (DE), and K176. E151 provides a ligand contact to Mg(2+).

This sequence belongs to the Nudix hydrolase family. NudK subfamily. In terms of assembly, homodimer. It depends on Mg(2+) as a cofactor.

It catalyses the reaction GDP-alpha-D-mannose + H2O = alpha-D-mannose 1-phosphate + GMP + 2 H(+). Functionally, nucleoside diphosphate sugar hydrolase that hydrolyzes GDP-mannose as its preferred substrate, yielding GMP and mannose-1-phosphate. The chain is GDP-mannose pyrophosphatase (nudK) from Cronobacter sakazakii (strain ATCC BAA-894) (Enterobacter sakazakii).